Consider the following 438-residue polypeptide: POU domain, class 3, transcription factor 3-A (438 aa).

Disordered regions lie at residues 22–43, 102–172, and 186–248; these read VHSESGGGGMQPGSGAVTSVSG, SPWS…QSQQ, and GMLN…PTSD. Polar residues-rich tracts occupy residues 103–123 and 146–159; these read PWSSSPVGMAGSPQQQDVKSS and QSHQSAWGGTTASH. A compositionally biased stretch (low complexity) spans 160 to 172; that stretch reads ISTITGGQQQSQQ. Over residues 210-230 the composition is skewed to basic residues; the sequence is HHHHHHHQQQHPHHHHHHQHH. Residues 242 to 316 enclose the POU-specific domain; that stretch reads EDTPTSDDLE…LLNKWLEEAD (75 aa). Positions 334–393 form a DNA-binding region, homeobox; sequence KRKKRTSIEVSVKGALESHFLKCPKPSAQEITSLADNLQLEKEVVRVWFCNRRQKEKRMT.

It belongs to the POU transcription factor family. Class-3 subfamily. Predominantly expressed in the embryonic and adult central nervous system. In adults, isoform 2 is expressed in the brain, ovary, basal cells of the skin and muscle satellite cells.

Its subcellular location is the nucleus. Transcription factor that may play important roles in patterning the embryonic brain. The chain is POU domain, class 3, transcription factor 3-A (pou3f3a) from Danio rerio (Zebrafish).